The chain runs to 1117 residues: Endogenous retrovirus group K member 9 Pol protein (1117 aa).

The N-myristoyl glycine moiety is linked to residue glycine 2. A Reverse transcriptase domain is found at 58–195 (KDWKRIGKEL…AGQVPVTLQP (138 aa)). The tract at residues 165–264 (GKGPELVGPS…APPSRQGSEL (100 aa)) is disordered. Residues 232-247 (GMPPAPQGRAPYPQPP) are compositionally biased toward pro residues. CCHC-type zinc fingers lie at residues 544-561 (GKCYNCGQIGHLKKNCPV) and 580-597 (DLCPRCKKGKHWASQCRS). Residues 598–629 (KFDKNGQPLSGNEQRGQPQAPQQTGAFPIQPF) form a disordered region. The segment covering 604–622 (QPLSGNEQRGQPQAPQQTG) has biased composition (polar residues). In terms of domain architecture, Peptidase A2 spans 800–875 (FEGLVDTGAD…IPLNLWGRDL (76 aa)). Aspartate 805 is an active-site residue. The G-patch domain maps to 890 to 936 (YSPTSQKIMTKRGYIPGKGLGKNEDGIKIPFEAKINQKREGIGYPFL).

This sequence belongs to the beta type-B retroviral polymerase family. HERV class-II K(HML-2) pol subfamily. Post-translationally, myristoylation is essential for retroviral assembly. Alteration of the glycine residue leads to a block in the budding of particles and an accumulation of Gag inside the cell. Specific enzymatic cleavages may yield mature proteins.

Its subcellular location is the cell membrane. It carries out the reaction Processing at the authentic HIV-1 PR recognition site and release of the mature p17 matrix and the p24 capsid protein, as a result of the cleavage of the -SQNY-|-PIVQ- cleavage site.. It catalyses the reaction DNA(n) + a 2'-deoxyribonucleoside 5'-triphosphate = DNA(n+1) + diphosphate. The enzyme catalyses Endonucleolytic cleavage to 5'-phosphomonoester.. The products of the Gag polyproteins of infectious retroviruses perform highly complex orchestrated tasks during the assembly, budding, maturation, and infection stages of the viral replication cycle. During viral assembly, the proteins form membrane associations and self-associations that ultimately result in budding of an immature virion from the infected cell. Gag precursors also function during viral assembly to selectively bind and package two plus strands of genomic RNA. Endogenous Gag proteins may have kept, lost or modified their original function during evolution. Its function is as follows. Early post-infection, the reverse transcriptase converts the viral RNA genome into double-stranded viral DNA. The RNase H domain of the reverse transcriptase performs two functions. It degrades the RNA template and specifically removes the RNA primer from the RNA/DNA hybrid. Following nuclear import, the integrase catalyzes the insertion of the linear, double-stranded viral DNA into the host cell chromosome. Endogenous Pol proteins may have kept, lost or modified their original function during evolution. In Homo sapiens (Human), this protein is Endogenous retrovirus group K member 9 Pol protein (ERVK-9).